A 348-amino-acid chain; its full sequence is uncharacterized protein (348 aa).

The N-terminal stretch at 1 to 26 (MKKRIILLLAVIIAAAAAGVAFYVAK) is a signal peptide.

This is an uncharacterized protein from Bacillus subtilis (strain 168).